We begin with the raw amino-acid sequence, 200 residues long: ATP-dependent Clp protease proteolytic subunit (200 aa).

Ser-101 acts as the Nucleophile in catalysis. His-126 is a catalytic residue.

Belongs to the peptidase S14 family. Component of the chloroplastic Clp protease core complex.

It is found in the plastid. The protein localises to the chloroplast stroma. The catalysed reaction is Hydrolysis of proteins to small peptides in the presence of ATP and magnesium. alpha-casein is the usual test substrate. In the absence of ATP, only oligopeptides shorter than five residues are hydrolyzed (such as succinyl-Leu-Tyr-|-NHMec, and Leu-Tyr-Leu-|-Tyr-Trp, in which cleavage of the -Tyr-|-Leu- and -Tyr-|-Trp bonds also occurs).. Its function is as follows. Cleaves peptides in various proteins in a process that requires ATP hydrolysis. Has a chymotrypsin-like activity. Plays a major role in the degradation of misfolded proteins. The sequence is that of ATP-dependent Clp protease proteolytic subunit from Adiantum capillus-veneris (Maidenhair fern).